A 142-amino-acid chain; its full sequence is Profilin (142 aa).

It belongs to the profilin family. Occurs in many kinds of cells as a complex with monomeric actin in a 1:1 ratio. As to expression, expressed specifically in coelomocytes in response to injury.

It localises to the cytoplasm. It is found in the cytoskeleton. Binds to actin and affects the structure of the cytoskeleton. At high concentrations, profilin prevents the polymerization of actin, whereas it enhances it at low concentrations. By binding to PIP2, it inhibits the formation of IP3 and DG. In Strongylocentrotus purpuratus (Purple sea urchin), this protein is Profilin.